A 140-amino-acid chain; its full sequence is Ribosome-binding factor A (140 aa).

It belongs to the RbfA family. Monomer. Binds 30S ribosomal subunits, but not 50S ribosomal subunits or 70S ribosomes.

Its subcellular location is the cytoplasm. In terms of biological role, one of several proteins that assist in the late maturation steps of the functional core of the 30S ribosomal subunit. Associates with free 30S ribosomal subunits (but not with 30S subunits that are part of 70S ribosomes or polysomes). Required for efficient processing of 16S rRNA. May interact with the 5'-terminal helix region of 16S rRNA. The polypeptide is Ribosome-binding factor A (Cereibacter sphaeroides (strain ATCC 17025 / ATH 2.4.3) (Rhodobacter sphaeroides)).